Here is a 299-residue protein sequence, read N- to C-terminus: Taste receptor type 2 member 4 (299 aa).

At 1–9 (MLRLFYFSA) the chain is on the extracellular side. Residues 10-30 (IIASVILNFVGIIMNLFITVV) form a helical membrane-spanning segment. The Cytoplasmic portion of the chain corresponds to 31–46 (NCKTWVKSHRISSSDR). Residues 47–67 (ILFSLGITRFLMLGLFLVNTI) form a helical membrane-spanning segment. Residues 68-81 (YFVSSNTERSVYLS) are Extracellular-facing. Residues 82-102 (AFFVLCFMFLDSSSVWFVTLL) form a helical membrane-spanning segment. Residues 103 to 131 (NILYCVKITNFQHSVFLLLKRNISPKIPR) are Cytoplasmic-facing. Residues 132–152 (LLLACVLISAFTTCLYITLSQ) traverse the membrane as a helical segment. Residues 153–172 (ASPFPELVTTRNNTSFNISE) are Extracellular-facing. Asn164, Asn165, and Asn169 each carry an N-linked (GlcNAc...) asparagine glycan. A helical transmembrane segment spans residues 173–193 (GILSLVVSLVLSSSLQFIINV). The Cytoplasmic segment spans residues 194-230 (TSASLLIHSLRRHIQKMQKNATGFWNPQTEAHVGAMK). Residues 231–251 (LMVYFLILYIPYSVATLVQYL) form a helical membrane-spanning segment. Residues 252 to 262 (PFYAGMDMGTK) lie on the Extracellular side of the membrane. The helical transmembrane segment at 263-283 (SICLIFATLYSPGHSVLIIIT) threads the bilayer. Topologically, residues 284–299 (HPKLKTTAKKILCFKK) are cytoplasmic.

Belongs to the G-protein coupled receptor T2R family. In terms of tissue distribution, expressed in subsets of taste receptor cells of the tongue and palate epithelium and exclusively in gustducin-positive cells. Expressed on airway ciliated epithelium.

It is found in the membrane. The protein localises to the cell projection. Its subcellular location is the cilium membrane. Its function is as follows. Gustducin-coupled receptor for denatonium and N(6)-propyl-2-thiouracil implicated in the perception of bitter compounds in the oral cavity and the gastrointestinal tract. Signals through PLCB2 and the calcium-regulated cation channel TRPM5. In airway epithelial cells, binding of denatonium increases the intracellular calcium ion concentration and stimulates ciliary beat frequency. The sequence is that of Taste receptor type 2 member 4 (TAS2R4) from Homo sapiens (Human).